A 547-amino-acid chain; its full sequence is Sodium/hydrogen exchanger 9B2 (547 aa).

The tract at residues 1–68 is disordered; it reads MEDEDKTAEC…PQDSPTEPNG (68 aa). Residues 1–86 are Cytoplasmic-facing; sequence MEDEDKTAEC…ACPPRGCLAR (86 aa). Residues 23 to 45 are compositionally biased toward basic and acidic residues; the sequence is APPHHELQEERVMSLRGTDRSEP. S49 carries the phosphoserine modification. Residues 87–104 form a helical membrane-spanning segment; sequence VITNGTMVVLLWAMVWSV. Topologically, residues 105–113 are extracellular; that stretch reads TGPECLPGG. Residues 114–133 form a helical membrane-spanning segment; sequence NLFGIIILFYCSITGGKLFG. Over 134-144 the chain is Cytoplasmic; sequence LIKFPTLPPLP. The helical transmembrane segment at 145 to 161 threads the bilayer; it reads PLLGMLLAGFLLRNIPV. Residues 162-171 are Extracellular-facing; sequence INDSVRIQHK. The chain crosses the membrane as a helical span at residues 172–189; the sequence is WSSSLRSIALSVILVRAG. Over 190–200 the chain is Cytoplasmic; that stretch reads LGLDSKALRKL. Residues 201 to 227 form a helical membrane-spanning segment; the sequence is KGVCVRLAMGPCIVEACASAILSHFLM. At 228-233 the chain is on the extracellular side; the sequence is GLPWQW. The chain crosses the membrane as a helical span at residues 234 to 242; sequence GFILGFVVG. Residues 243 to 270 lie on the Cytoplasmic side of the membrane; it reads AVSPAVVVPSMLLLQEGGYGVGKGIPTL. Na(+) is bound by residues V244, G275, D278, and D279. A helical membrane pass occupies residues 271 to 290; the sequence is LMAAGSFDDILAITGFNTCL. Over 291-300 the chain is Extracellular; it reads GVAFSTGSTV. Residues 301 to 324 form a helical membrane-spanning segment; that stretch reads FNIFRGILEVVIGVAAGSFLGFFI. Over 325–339 the chain is Cytoplasmic; the sequence is QYFPSRDQDNLVWKR. Residues 340–357 traverse the membrane as a helical segment; the sequence is AFLVLGFAVLAVFSSVYF. Topologically, residues 358–361 are extracellular; it reads SFPG. The helical transmembrane segment at 362–373 threads the bilayer; it reads SGGLCTLVMAFL. The Cytoplasmic segment spans residues 374–390; it reads AGMRWTDKKSEVEKVIA. Residues 391 to 411 traverse the membrane as a helical segment; sequence VTWDVFQPLLFGLIGAEVSIV. The Extracellular segment spans residues 412-417; it reads SLRAET. Residues 418–440 form a helical membrane-spanning segment; sequence VGLCVATLSIAVLIRILTTFLMV. Over 441 to 461 the chain is Cytoplasmic; it reads CFAGFNIKEKIFISFAWLPKA. Residues 462 to 473 form a helical membrane-spanning segment; that stretch reads TVQAAIGSVALD. Topologically, residues 474 to 486 are extracellular; that stretch reads TARSHGEKQLEDY. Residues 487-509 form a helical membrane-spanning segment; the sequence is GMDVLTVAFLAILITAPIGSLLI. At 510–547 the chain is on the cytoplasmic side; sequence GLLGPRVLQKSEHRTEEEVQGETSAHIQRKPEDSITEA. Residues 522–547 are disordered; it reads HRTEEEVQGETSAHIQRKPEDSITEA. The span at 538–547 shows a compositional bias: basic and acidic residues; it reads RKPEDSITEA.

This sequence belongs to the monovalent cation:proton antiporter 1 (CPA1) transporter (TC 2.A.36) family. As to quaternary structure, homodimer; dimerization is essential for SLC9B2 activity. Lipids seem to play a role in the stabilization of the dimerization subdomain. Widely expressed. However expression seems to be restricted to specific cell types within individual organs, e.g. osteoclasts in the bone, distal tubules of the kidney or beta-cells of Langerhans islets. In sperm specifically present in the principal piece of sperm tail (at protein level).

The protein localises to the cell membrane. Its subcellular location is the mitochondrion membrane. It localises to the endosome membrane. The protein resides in the lysosome membrane. It is found in the recycling endosome membrane. The protein localises to the cytoplasmic vesicle. Its subcellular location is the secretory vesicle. It localises to the synaptic vesicle membrane. The protein resides in the cell projection. It is found in the cilium. The protein localises to the flagellum membrane. Its subcellular location is the basolateral cell membrane. It localises to the apical cell membrane. It carries out the reaction Na(+)(in) + H(+)(out) = Na(+)(out) + H(+)(in). The enzyme catalyses Li(+)(out) + H(+)(in) = Li(+)(in) + H(+)(out). It catalyses the reaction Li(+)(in) + Na(+)(out) = Li(+)(out) + Na(+)(in). Allosterically inhibited by the N-terminal domain. Inhibited by phloretin. Functionally, electroneutral Na(+) Li(+)/H(+) antiporter that extrudes Na(+) or Li(+) in exchange for external protons across the membrane. Uses the proton gradient/membrane potential to extrude sodium. Contributes to the regulation of intracellular pH and sodium homeostasis. Also able to mediate Na(+)/Li(+) antiporter activity in kidney. May play a physiological role in renal tubular function and blood pressure homeostasis. Plays an important role for insulin secretion and clathrin-mediated endocytosis in beta-cells. Involved in sperm motility and fertility. It is controversial whether SLC9B2 plays a role in osteoclast differentiation or not. The sequence is that of Sodium/hydrogen exchanger 9B2 from Mus musculus (Mouse).